Reading from the N-terminus, the 193-residue chain is Secreted RxLR effector protein 126 (193 aa).

Positions 1-20 are cleaved as a signal peptide; it reads MRYLLAVLIAAAFVISSGTS. The RxLR-dEER motif lies at 50–64; the sequence is RMLQTKAVNGLEEER.

Belongs to the RxLR effector family.

It is found in the secreted. The protein resides in the host membrane. Secreted effector that completely suppresses the host cell death induced by cell death-inducing proteins. The protein is Secreted RxLR effector protein 126 of Plasmopara viticola (Downy mildew of grapevine).